The primary structure comprises 39 residues: Contryphan-Cal2 (39 aa).

Positions M1–S20 are cleaved as a signal peptide. The cysteines at positions 29 and 35 are disulfide-linked.

Expressed by the venom duct.

It localises to the secreted. Probable neurotoxin. The chain is Contryphan-Cal2 from Californiconus californicus (California cone).